We begin with the raw amino-acid sequence, 230 residues long: Large ribosomal subunit protein uL1 (230 aa).

This sequence belongs to the universal ribosomal protein uL1 family. In terms of assembly, part of the 50S ribosomal subunit.

Binds directly to 23S rRNA. The L1 stalk is quite mobile in the ribosome, and is involved in E site tRNA release. Functionally, protein L1 is also a translational repressor protein, it controls the translation of the L11 operon by binding to its mRNA. The chain is Large ribosomal subunit protein uL1 from Leptospira biflexa serovar Patoc (strain Patoc 1 / Ames).